Reading from the N-terminus, the 118-residue chain is Myotrophin (118 aa).

ANK repeat units lie at residues 1-30 (MGDK…DVNR), 34-65 (GGRK…NAPD), and 67-98 (HGIT…NRKG).

This sequence belongs to the myotrophin family.

It localises to the cytoplasm. The protein resides in the nucleus. The protein localises to the perinuclear region. In terms of biological role, regulates NF-kappa-B transcription factor activity. Promotes growth of cardiomyocytes, but not cardiomyocyte proliferation. Promotes cardiac muscle hypertrophy. Plays a role in the regulation of the growth of actin filaments. Inhibits the activity of the F-actin-capping protein complex. This Danio rerio (Zebrafish) protein is Myotrophin (mtpn).